The chain runs to 612 residues: Transcription factor ffsR (612 aa).

Residues 1 to 12 (MDTLTAPTTQSE) show a composition bias toward polar residues. Positions 1–21 (MDTLTAPTTQSEQPPPPLTAS) are disordered. Residues 28–60 (CDRCRSHKLRCNRDLMTSTNSPCQRCRKARVKC) constitute a DNA-binding region (zn(2)-C6 fungal-type). Over residues 73–82 (EELKNGENVH) the composition is skewed to basic and acidic residues. Disordered stretches follow at residues 73 to 130 (EELK…SMSG), 154 to 249 (DGST…VTSS), and 451 to 470 (GQGP…TTTN). Polar residues-rich tracts occupy residues 92 to 103 (SHRTASTPSNHA), 154 to 169 (DGST…TNGS), and 238 to 249 (LTQQHPAGVTSS). Residues 458 to 470 (PSQGSSSRSTTTN) are compositionally biased toward low complexity.

It is found in the nucleus. Functionally, transcription factor that specifically regulates the expression of the gene cluster that mediates the biosynthesis of the cytotoxic leucine-containing cytochalasans, including aspochalasin C, aspochalasin E, TMC-169, flavichalasine F, aspergillin PZ, aspochalasin M and flavichalasine G. The polypeptide is Transcription factor ffsR (Aspergillus flavipes).